A 328-amino-acid polypeptide reads, in one-letter code: Aryl-hydrocarbon-interacting protein-like 1 (328 aa).

Residues 53–145 (KQVGQPMSII…DLDELQKEPQ (93 aa)) form the PPIase FKBP-type domain. 3 TPR repeats span residues 178–211 (VPLL…LRNL), 230–263 (NTLI…HPGI), and 264–297 (VKAY…EPSM).

Interacts with NUB1.

It localises to the cytoplasm. The protein localises to the nucleus. Its function is as follows. May be important in protein trafficking and/or protein folding and stabilization. The sequence is that of Aryl-hydrocarbon-interacting protein-like 1 (Aipl1) from Mus musculus (Mouse).